The following is a 309-amino-acid chain: Taste receptor type 2 member 45 (309 aa).

Residue Met-1 is a topological domain, extracellular. Residues Ile-2 to Phe-22 form a helical membrane-spanning segment. Topologically, residues Ala-23–Arg-55 are cytoplasmic. A helical membrane pass occupies residues Val-56–Tyr-76. At Ser-77–Leu-98 the chain is on the extracellular side. Residues Ala-99–Leu-119 form a helical membrane-spanning segment. The Cytoplasmic portion of the chain corresponds to His-120–Lys-126. The chain crosses the membrane as a helical span at residues Ser-127–Val-147. Residues Asn-148 to Thr-178 are Extracellular-facing. Asn-161 carries an N-linked (GlcNAc...) asparagine glycan. The helical transmembrane segment at Val-179–Val-199 threads the bilayer. Residues Cys-200–Gln-229 lie on the Cytoplasmic side of the membrane. The chain crosses the membrane as a helical span at residues Thr-230–Trp-250. Residues Ser-251–Pro-259 are Extracellular-facing. The helical transmembrane segment at Val-260–Ile-280 threads the bilayer. The Cytoplasmic portion of the chain corresponds to Trp-281–Ser-309.

The protein belongs to the G-protein coupled receptor T2R family.

It is found in the membrane. Receptor that may play a role in the perception of bitterness and is gustducin-linked. May play a role in sensing the chemical composition of the gastrointestinal content. The activity of this receptor may stimulate alpha gustducin, mediate PLC-beta-2 activation and lead to the gating of TRPM5. This chain is Taste receptor type 2 member 45 (TAS2R45), found in Pan paniscus (Pygmy chimpanzee).